The sequence spans 98 residues: Putative protein adenylyltransferase MJ0128 (98 aa).

The GSX(10)DXD motif signature appears at G31 to D45. Mg(2+) is bound by residues D43, D45, and D75.

The protein belongs to the MntA antitoxin family. Probably forms a complex with cognate toxin MJ0127. It depends on Mg(2+) as a cofactor.

The catalysed reaction is L-tyrosyl-[protein] + ATP = O-(5'-adenylyl)-L-tyrosyl-[protein] + diphosphate. The enzyme catalyses O-(5'-adenylyl)-L-tyrosyl-[protein] + ATP = O-[5'-(adenylyl-(5'-&gt;3')-adenylyl)]-L-tyrosyl-[protein] + diphosphate. Functionally, probable antitoxin component of a putative type VII toxin-antitoxin (TA) system. Neutralizes cognate toxic MJ0127 by di-AMPylation. This is Putative protein adenylyltransferase MJ0128 from Methanocaldococcus jannaschii (strain ATCC 43067 / DSM 2661 / JAL-1 / JCM 10045 / NBRC 100440) (Methanococcus jannaschii).